The primary structure comprises 180 residues: Interleukin-17B (180 aa).

A signal peptide spans 1–20; the sequence is MDWPHNLLFLLTISIFLGLG. Positions 22–44 are disordered; it reads PRSPKSKRKGQGRPGPLAPGPHQ. A glycan (N-linked (GlcNAc...) asparagine) is linked at asparagine 75. Cystine bridges form between cysteine 121–cysteine 176 and cysteine 126–cysteine 178.

The protein belongs to the IL-17 family. Expressed in adult pancreas, small intestine, stomach, spinal cord and testis. Less pronounced expression in prostate, colon mucosal lining, and ovary.

The protein localises to the secreted. Stimulates the release of tumor necrosis factor alpha and IL-1-beta from the monocytic cell line THP-1. The polypeptide is Interleukin-17B (IL17B) (Homo sapiens (Human)).